Reading from the N-terminus, the 1738-residue chain is Sodium leak channel NALCN (1738 aa).

Residues Met1–Pro36 lie on the Cytoplasmic side of the membrane. Residues Trp37–Thr57 traverse the membrane as a helical segment. Residues Pro58–Pro65 lie on the Extracellular side of the membrane. Residues Pro66–Met90 form a helical membrane-spanning segment. Topologically, residues His91 to Arg106 are cytoplasmic. A helical transmembrane segment spans residues Trp107–Ile129. Residues Ala130–Ser137 lie on the Extracellular side of the membrane. A helical; Voltage-sensor membrane pass occupies residues Pro138–Phe158. Residues Arg159–Arg173 are Cytoplasmic-facing. Residues Ser174 to Met199 form a helical membrane-spanning segment. Over Phe200–Ser269 the chain is Extracellular. Disulfide bonds link Cys207–Cys239 and Cys229–Cys245. 2 N-linked (GlcNAc...) asparagine glycosylation sites follow: Asn210 and Asn216. An intramembrane region (pore-forming) is located at residues Ile270–Ala289. The Extracellular portion of the chain corresponds to Ile290–Pro294. A helical transmembrane segment spans residues Arg295–Ile322. Residues Glu323–Arg382 lie on the Cytoplasmic side of the membrane. Residues Ser383–Ser403 form a helical membrane-spanning segment. Residues Asn404–Asp416 lie on the Extracellular side of the membrane. Residues Glu417–Cys439 form a helical membrane-spanning segment. Residues Leu440 to Ser447 are Cytoplasmic-facing. The chain crosses the membrane as a helical span at residues Ser448–Asp468. Topologically, residues Leu469 to Ser472 are extracellular. The chain crosses the membrane as a helical; Voltage-sensor span at residues Gln473–Leu492. Residues Glu493–Pro502 lie on the Cytoplasmic side of the membrane. The helical transmembrane segment at Gly503 to Phe530 threads the bilayer. Topologically, residues Val531 to Ala543 are extracellular. The pore-forming intramembrane region spans Phe544 to Thr563. Over Leu564–His569 the chain is Extracellular. The helical transmembrane segment at Met570–Leu599 threads the bilayer. Topologically, residues Asp600 to Thr886 are cytoplasmic. The disordered stretch occupies residues Gln762 to Leu785. The stretch at Tyr795–His830 forms a coiled coil. The chain crosses the membrane as a helical span at residues Tyr887 to Glu906. Residues Ser907–Ala915 are Extracellular-facing. Residues Pro916–Ala939 form a helical membrane-spanning segment. Topologically, residues Asp940 to Thr947 are cytoplasmic. A helical transmembrane segment spans residues Ala948–Met972. Residues Pro973–Ser980 lie on the Extracellular side of the membrane. Residues Gly981–Met1003 form a helical; Voltage-sensor membrane-spanning segment. Over Arg1004–Lys1015 the chain is Cytoplasmic. The helical transmembrane segment at Glu1016–Phe1039 threads the bilayer. Over Ala1040 to Ala1104 the chain is Extracellular. Cys1046 and Cys1057 are oxidised to a cystine. The N-linked (GlcNAc...) asparagine glycan is linked to Asn1064. Residues Met1105 to Ile1124 constitute an intramembrane region (pore-forming). Residues Ile1125 to Gly1129 lie on the Extracellular side of the membrane. A helical transmembrane segment spans residues Pro1130 to Phe1159. The Cytoplasmic portion of the chain corresponds to Asn1160–Pro1210. Residues Phe1211 to Leu1227 traverse the membrane as a helical segment. Residues Ser1228–Pro1236 lie on the Extracellular side of the membrane. The chain crosses the membrane as a helical span at residues Val1237–Ile1260. At Ile1261–Ser1271 the chain is on the cytoplasmic side. A helical transmembrane segment spans residues Arg1272–Ala1293. The Extracellular segment spans residues Leu1294 to Asn1296. The chain crosses the membrane as a helical; Voltage-sensor span at residues Ala1297–His1318. Residues Val1319–Ser1331 are Cytoplasmic-facing. The chain crosses the membrane as a helical span at residues Met1332 to Phe1357. The Extracellular segment spans residues Gly1358 to Ala1378. An intramembrane region (pore-forming) is located at residues Ile1379–Cys1398. Topologically, residues Met1399–Tyr1420 are extracellular. An intrachain disulfide couples Cys1405 to Cys1417. A helical transmembrane segment spans residues Ala1421–Val1447. Over Glu1448 to Ile1738 the chain is Cytoplasmic. Residues Pro1611–Pro1678 are disordered. Residues Ser1613–Met1632 show a composition bias toward polar residues. The span at Gln1633–Ser1648 shows a compositional bias: low complexity.

Belongs to the NALCN family. In terms of assembly, found in a complex with NALCN, UNC79, UNC80 and NACL1; these auxiliary subunits are indispensable for the function of NALCN channel. Interacts with UNC80; required for the NALCN activation/inhibition by GPCRs in neurons. Found in a complex with NALCN, UNC79 and UNC80; UNC80 bridges NALCN to UNC79. Interacts with CHRM3. In terms of processing, phosphorylated on tyrosine residues.

The protein resides in the cell membrane. It catalyses the reaction Na(+)(in) = Na(+)(out). With respect to regulation, inhibited by low micromolar concentrations of Gd(3+) and high micromolar concentrations of verapamil. Insensitive to tetrodotoxin (TTX) and potentiated by low external Ca(2+) concentration. Its function is as follows. Voltage-gated ion channel responsible for the resting Na(+) permeability that controls neuronal excitability. NALCN channel functions as a multi-protein complex, which consists at least of NALCN, NALF1, UNC79 and UNC80. NALCN is the voltage-sensing, pore-forming subunit of the NALCN channel complex. NALCN channel complex is constitutively active and conducts monovalent cations but is blocked by physiological concentrations of extracellular divalent cations. In addition to its role in regulating neuronal excitability, is required for normal respiratory rhythm, systemic osmoregulation by controlling the serum sodium concentration and in the regulation of the intestinal pace-making activity in the interstitial cells of Cajal. NALCN channel is also activated by neuropeptides such as neurotensin and substance P (SP) through a SRC family kinases-dependent pathway. In addition, NALCN activity is enhanced/modulated by several GPCRs, such as CHRM3. The sequence is that of Sodium leak channel NALCN from Homo sapiens (Human).